Consider the following 144-residue polypeptide: Single-stranded DNA-binding protein 3 (144 aa).

In terms of domain architecture, SSB spans 1–103 (MNKVVLIGRL…IVAEEVQFLE (103 aa)). The segment covering 112–134 (MANDQFNNGNENGSMQLPDNNDI) has biased composition (polar residues). A disordered region spans residues 112 to 144 (MANDQFNNGNENGSMQLPDNNDITPIDDGDIPF).

As to quaternary structure, homotetramer.

This Clostridium acetobutylicum (strain ATCC 824 / DSM 792 / JCM 1419 / IAM 19013 / LMG 5710 / NBRC 13948 / NRRL B-527 / VKM B-1787 / 2291 / W) protein is Single-stranded DNA-binding protein 3 (ssb3).